The following is a 428-amino-acid chain: Enolase (428 aa).

Gln-163 serves as a coordination point for (2R)-2-phosphoglycerate. Glu-205 functions as the Proton donor in the catalytic mechanism. Positions 242, 284, and 311 each coordinate Mg(2+). (2R)-2-phosphoglycerate contacts are provided by Lys-336, Arg-365, Ser-366, and Lys-387. Lys-336 functions as the Proton acceptor in the catalytic mechanism.

The protein belongs to the enolase family. Requires Mg(2+) as cofactor.

The protein resides in the cytoplasm. Its subcellular location is the secreted. It is found in the cell surface. The catalysed reaction is (2R)-2-phosphoglycerate = phosphoenolpyruvate + H2O. The protein operates within carbohydrate degradation; glycolysis; pyruvate from D-glyceraldehyde 3-phosphate: step 4/5. Its function is as follows. Catalyzes the reversible conversion of 2-phosphoglycerate (2-PG) into phosphoenolpyruvate (PEP). It is essential for the degradation of carbohydrates via glycolysis. The polypeptide is Enolase (Tropheryma whipplei (strain TW08/27) (Whipple's bacillus)).